Reading from the N-terminus, the 129-residue chain is Small ribosomal subunit protein uS11 (129 aa).

This sequence belongs to the universal ribosomal protein uS11 family. As to quaternary structure, part of the 30S ribosomal subunit.

Located on the platform of the 30S subunit. This is Small ribosomal subunit protein uS11 from Haloarcula marismortui (strain ATCC 43049 / DSM 3752 / JCM 8966 / VKM B-1809) (Halobacterium marismortui).